The chain runs to 89 residues: Transcription elongation factor 1 homolog (89 aa).

4 residues coordinate Zn(2+): cysteine 25, cysteine 28, cysteine 49, and cysteine 52.

This sequence belongs to the ELOF1 family.

Its subcellular location is the nucleus. In terms of biological role, transcription elongation factor implicated in the maintenance of proper chromatin structure in actively transcribed regions. In Oryza sativa subsp. japonica (Rice), this protein is Transcription elongation factor 1 homolog.